Here is a 263-residue protein sequence, read N- to C-terminus: Linear gramicidin dehydrogenase LgrE (263 aa).

The active site involves Ser-96.

It belongs to the thioesterase family.

Its function is as follows. In the final step of gramicidin biosynthesis, reduces the pentadecapeptide-aldehyde intermediate, that is released from the terminal module of the non-ribosomal peptide synthetase LgrD, to the final product ethanolamine-containing gramicidin. The polypeptide is Linear gramicidin dehydrogenase LgrE (lgrE) (Brevibacillus parabrevis).